The following is a 194-amino-acid chain: uncharacterized protein (194 aa).

This is an uncharacterized protein from Rickettsia prowazekii (strain Madrid E).